The chain runs to 4034 residues: Polyketide synthase-nonribosomal peptide synthetase ACE1 (4034 aa).

In terms of domain architecture, Ketosynthase family 3 (KS3) spans 10–448 (TEPIAIIGSG…GANAHVILES (439 aa)). Residues Cys-183, His-322, and His-368 each act as for beta-ketoacyl synthase activity in the active site. Positions 560–879 (VFTGQGAQWA…PYFGCLSRGT (320 aa)) are acyl transferase. The N-terminal hotdog fold stretch occupies residues 951–1082 (NELLGTRLPD…GDLVVLLGEP (132 aa)). Residues 951–1257 (NELLGTRLPD…TKPLSPPSAA (307 aa)) form the PKS/mFAS DH domain. The dehydratase (DH) domain stretch occupies residues 952–1252 (ELLGTRLPDD…LQGLHTKPLS (301 aa)). Residue His-983 is the Proton acceptor; for dehydratase activity of the active site. The segment at 1097–1257 (MKDIDEERFY…TKPLSPPSAA (161 aa)) is C-terminal hotdog fold. The Proton donor; for dehydratase activity role is filled by Asp-1157. A methyltransferase (MT) domain region spans residues 1396–1594 (NMLNRFYSDA…SGADIVTPHH (199 aa)). Residues 2144 to 2317 (TYWLVGLTGG…AGSSVEIGCI (174 aa)) are ketoreductase (KR)domain. The Carrier 1 domain occupies 2424–2505 (KSSEEVLDIL…LLLEFVQGLI (82 aa)). At Ser-2465 the chain carries O-(pantetheine 4'-phosphoryl)serine. Residues 2512-2598 (KLDGSDGADA…SPTTSASMAS (87 aa)) form a disordered region. Low complexity predominate over residues 2556–2577 (PSGPASPTSPSSATASPGRSRS). The segment covering 2586–2598 (TPVSPTTSASMAS) has biased composition (polar residues). Residues 2608–3037 (TVPVSFGQSR…ATSLNRPAIY (430 aa)) are condensation. Residues 3073-3473 (KYATKFALRN…GGLIIEGRID (401 aa)) form an adenylation region. The Carrier 2 domain maps to 3598-3678 (AELGSDQARM…AMTDLVLSDD (81 aa)). O-(pantetheine 4'-phosphoryl)serine is present on Ser-3638. The segment at 3719-3944 (LTGATGFLGR…DFVSVENVAA (226 aa)) is reductase-like.

This sequence belongs to the NRP synthetase family.

It localises to the cytoplasm. Its pathway is secondary metabolite biosynthesis. Hybrid PKS-NRPS synthetase; part of the gene cluster that mediates the biosynthesis of a tyrosine-derived cytochalasan acting as a fungal signal recognized by resistant rice plants and leads to avirulence in Pi33 resistant rice cultivars. The first step in the pathway is catalyzed by the hybrid PKS-NRPS ACE1, assisted by the enoyl reductase RAP1, that are responsible for fusion of the tyrosine precursor and the polyketide backbone. The polyketide synthase module (PKS) of ACE1 is responsible for the synthesis of the polyketide backbone and the downstream nonribosomal peptide synthetase (NRPS) amidates the carboxyl end of the polyketide with the tyrosine precursor. Because ACE1 lacks a designated enoylreductase (ER) domain, the required activity is provided the enoyl reductase RAP1. Reduction by the hydrolyase ORFZ, followed by dehydration and intra-molecular Diels-Alder cyclization by the Diels-Alderase ORF3 then yield the required isoindolone-fused macrocycle. A number of oxidative steps catalyzed by the tailoring enzymes identified within the cluster, including cytochrome P450 monooxygenases CYP1 to CYP4, the FAD-linked oxidoreductase OXR2 and the short-chain dehydrogenase/reductase OXR1, are further required to afford the final cytochalasans that confer avirulence and which have still to be identified. The monooxygenase CYP1 has been shown to be a site-selective C-18 hydroxylase whereas the function of CYP3 is the site-selective epoxidation of the C-6/C-7 olefin that is present in some intermediate compounds. Finally, SYN2 and RAP2 are not required for avirulence in Pi33 resistant rice cultivars. This chain is Polyketide synthase-nonribosomal peptide synthetase ACE1, found in Pyricularia oryzae (strain 70-15 / ATCC MYA-4617 / FGSC 8958) (Rice blast fungus).